Reading from the N-terminus, the 285-residue chain is Bifunctional protein FolD (285 aa).

166 to 168 (GAS) provides a ligand contact to NADP(+).

The protein belongs to the tetrahydrofolate dehydrogenase/cyclohydrolase family. Homodimer.

It catalyses the reaction (6R)-5,10-methylene-5,6,7,8-tetrahydrofolate + NADP(+) = (6R)-5,10-methenyltetrahydrofolate + NADPH. The catalysed reaction is (6R)-5,10-methenyltetrahydrofolate + H2O = (6R)-10-formyltetrahydrofolate + H(+). It functions in the pathway one-carbon metabolism; tetrahydrofolate interconversion. In terms of biological role, catalyzes the oxidation of 5,10-methylenetetrahydrofolate to 5,10-methenyltetrahydrofolate and then the hydrolysis of 5,10-methenyltetrahydrofolate to 10-formyltetrahydrofolate. The polypeptide is Bifunctional protein FolD (Thioalkalivibrio sulfidiphilus (strain HL-EbGR7)).